A 302-amino-acid chain; its full sequence is Acidic endochitinase (302 aa).

Residues 1–30 (MTNMTLRKHVIYFLFFISCSLSKPSDASRG) form the signal peptide. In terms of domain architecture, GH18 spans 31 to 302 (GIAIYWGQNG…GYSSSILASV (272 aa)). 2 disulfides stabilise this stretch: cysteine 49/cysteine 96 and cysteine 79/cysteine 86. Glutamate 156 serves as the catalytic Proton donor. Cysteine 188 and cysteine 217 are oxidised to a cystine.

It belongs to the glycosyl hydrolase 18 family. Chitinase class III subfamily.

The protein localises to the secreted. It is found in the extracellular space. It carries out the reaction Random endo-hydrolysis of N-acetyl-beta-D-glucosaminide (1-&gt;4)-beta-linkages in chitin and chitodextrins.. In terms of biological role, this protein functions as a defense against chitin containing fungal pathogens. This chain is Acidic endochitinase (CHIB1), found in Arabidopsis thaliana (Mouse-ear cress).